A 226-amino-acid chain; its full sequence is Cytidylate kinase (226 aa).

10 to 18 contributes to the ATP binding site; the sequence is GPASSGKST.

This sequence belongs to the cytidylate kinase family. Type 1 subfamily.

It is found in the cytoplasm. It carries out the reaction CMP + ATP = CDP + ADP. It catalyses the reaction dCMP + ATP = dCDP + ADP. This chain is Cytidylate kinase, found in Streptococcus equi subsp. zooepidemicus (strain MGCS10565).